We begin with the raw amino-acid sequence, 51 residues long: Small ribosomal subunit protein eS31 (51 aa).

The Zn(2+) site is built by Cys-21, Cys-24, Cys-39, and Cys-42. Residues 21–42 form a C4-type zinc finger; that stretch reads CPRCGPGVFLAEHEDRFSCGRC.

This sequence belongs to the eukaryotic ribosomal protein eS31 family. Part of the 30S ribosomal subunit. It depends on Zn(2+) as a cofactor.

In Picrophilus torridus (strain ATCC 700027 / DSM 9790 / JCM 10055 / NBRC 100828 / KAW 2/3), this protein is Small ribosomal subunit protein eS31.